We begin with the raw amino-acid sequence, 276 residues long: Golgi apparatus membrane protein TVP23 homolog C (276 aa).

Met-1 is subject to N-acetylmethionine. The segment at 1 to 21 (MLQQDSNDDTEDVSLFDAEEE) is disordered. 2 helical membrane passes run 52–72 (LLCE…ILLL) and 126–146 (IFWL…FSAL). The segment at 254-276 (GESPNSRGTGEPGPKFHLASGMH) is disordered.

It belongs to the TVP23 family.

It is found in the membrane. This chain is Golgi apparatus membrane protein TVP23 homolog C (TVP23C), found in Homo sapiens (Human).